We begin with the raw amino-acid sequence, 206 residues long: LexA repressor (206 aa).

The segment at residues 28 to 48 is a DNA-binding region (H-T-H motif); sequence VREIGQAVGLASSSTVHGHLS. Active-site for autocatalytic cleavage activity residues include Ser-128 and Lys-166.

Belongs to the peptidase S24 family. In terms of assembly, homodimer.

It carries out the reaction Hydrolysis of Ala-|-Gly bond in repressor LexA.. Its function is as follows. Represses a number of genes involved in the response to DNA damage (SOS response), including recA and lexA. In the presence of single-stranded DNA, RecA interacts with LexA causing an autocatalytic cleavage which disrupts the DNA-binding part of LexA, leading to derepression of the SOS regulon and eventually DNA repair. In Bacillus cytotoxicus (strain DSM 22905 / CIP 110041 / 391-98 / NVH 391-98), this protein is LexA repressor.